We begin with the raw amino-acid sequence, 528 residues long: Glucose-6-phosphate isomerase (528 aa).

Glu322 functions as the Proton donor in the catalytic mechanism. Catalysis depends on residues His351 and Lys455.

This sequence belongs to the GPI family.

It is found in the cytoplasm. It carries out the reaction alpha-D-glucose 6-phosphate = beta-D-fructose 6-phosphate. The protein operates within carbohydrate biosynthesis; gluconeogenesis. It participates in carbohydrate degradation; glycolysis; D-glyceraldehyde 3-phosphate and glycerone phosphate from D-glucose: step 2/4. In terms of biological role, catalyzes the reversible isomerization of glucose-6-phosphate to fructose-6-phosphate. This is Glucose-6-phosphate isomerase from Nostoc punctiforme (strain ATCC 29133 / PCC 73102).